The chain runs to 212 residues: RING-H2 finger protein ATL68 (212 aa).

Residues 24 to 44 (LGLGYSIAIALGFLVLISTII) traverse the membrane as a helical segment. Residues 136–178 (CSICLCEYMEEEMLRMMPECKHYFHVYCLDAWLKLNGSCPVCR) form an RING-type; atypical zinc finger. Residues 182-212 (LPTPQSTPQSTPLSEVVPLSQYAADRRRSRR) form a disordered region. The segment covering 185 to 195 (PQSTPQSTPLS) has biased composition (low complexity).

Belongs to the RING-type zinc finger family. ATL subfamily.

It is found in the membrane. It carries out the reaction S-ubiquitinyl-[E2 ubiquitin-conjugating enzyme]-L-cysteine + [acceptor protein]-L-lysine = [E2 ubiquitin-conjugating enzyme]-L-cysteine + N(6)-ubiquitinyl-[acceptor protein]-L-lysine.. Its pathway is protein modification; protein ubiquitination. The polypeptide is RING-H2 finger protein ATL68 (ATL68) (Arabidopsis thaliana (Mouse-ear cress)).